The chain runs to 880 residues: Protein translocase subunit SecA (880 aa).

ATP is bound by residues Gln86, 104–108 (GEGKT), and Asp511. Residues 837-871 (AQKIQRSDGDGARRPVEKPKKIGRNDPCPCGSGKK) form a disordered region. Residues 841–860 (QRSDGDGARRPVEKPKKIGR) show a composition bias toward basic and acidic residues. Residues Cys864, Cys866, Cys875, and Cys876 each contribute to the Zn(2+) site.

This sequence belongs to the SecA family. As to quaternary structure, monomer and homodimer. Part of the essential Sec protein translocation apparatus which comprises SecA, SecYEG and auxiliary proteins SecDF. Other proteins may also be involved. Requires Zn(2+) as cofactor.

It is found in the cell inner membrane. The protein resides in the cytoplasm. The enzyme catalyses ATP + H2O + cellular proteinSide 1 = ADP + phosphate + cellular proteinSide 2.. Its function is as follows. Part of the Sec protein translocase complex. Interacts with the SecYEG preprotein conducting channel. Has a central role in coupling the hydrolysis of ATP to the transfer of proteins into and across the cell membrane, serving as an ATP-driven molecular motor driving the stepwise translocation of polypeptide chains across the membrane. This is Protein translocase subunit SecA from Thermodesulfovibrio yellowstonii (strain ATCC 51303 / DSM 11347 / YP87).